A 224-amino-acid polypeptide reads, in one-letter code: Germin-like protein 8-11 (224 aa).

The N-terminal stretch at 1-22 is a signal peptide; sequence MASSSFLLLATLLAMASWQGMA. Cys32 and Cys47 are oxidised to a cystine. The region spanning 62–212 is the Cupin type-1 domain; that stretch reads AMLDTPRKTN…AFQVEKGTID (151 aa). A glycan (N-linked (GlcNAc...) asparagine) is linked at Asn76. The Mn(2+) site is built by His109, His111, Glu116, and His157.

The protein belongs to the germin family. Oligomer (believed to be a pentamer but probably hexamer).

Its subcellular location is the secreted. The protein localises to the extracellular space. The protein resides in the apoplast. Its function is as follows. Plays a role in broad-spectrum disease resistance. Probably has no oxalate oxidase activity even if the active site is conserved. The polypeptide is Germin-like protein 8-11 (Oryza sativa subsp. japonica (Rice)).